The chain runs to 311 residues: Ribosomal protein L11 methyltransferase (311 aa).

S-adenosyl-L-methionine contacts are provided by T162, G183, D205, and N248.

This sequence belongs to the methyltransferase superfamily. PrmA family.

The protein localises to the cytoplasm. It catalyses the reaction L-lysyl-[protein] + 3 S-adenosyl-L-methionine = N(6),N(6),N(6)-trimethyl-L-lysyl-[protein] + 3 S-adenosyl-L-homocysteine + 3 H(+). In terms of biological role, methylates ribosomal protein L11. The sequence is that of Ribosomal protein L11 methyltransferase from Bacillus velezensis (strain DSM 23117 / BGSC 10A6 / LMG 26770 / FZB42) (Bacillus amyloliquefaciens subsp. plantarum).